A 457-amino-acid chain; its full sequence is MLSDREVLSTLEMLKNEHLDVRTVTLGVSLFDCAGHDPEKFKENVQRKIFRLAGNLVKVCDEIGIRYGIPVVNKRVAVSPIAVAACSFSRPQMVEVARKLDETAADIGIDFIGGFGALVEKGFTEGDRALIAAIPEALASTRRVCSSVNVASTRAGINMDAVYLMGKTIKDAAELTREADGIACAKLCVFANIPEDVPFMAGAYLGVGEPDSVINVGVSGPGVVKKAIDRARAANPHLDLGALSDIIKRTSFKVTRVGELIGRQVAEKLGVPFGVVDLSLAPTPNVGDSVGEIFQSLGLQSIGVPGTTAALALLNDAVKKGGAFASSYVGGLSGAFIPVSEDLNIAAAASRGYLSMEKLEAMTSVCSVGLDMVALAGDTSAETLAGIIADEMAIGVINKKTTAARLIPVPGKKAGEKASFGGLLGEAVIIAVSSNFGSREFISLGGRIPAPIHSLIN.

This sequence belongs to the UPF0210 family. In terms of assembly, homodimer.

This Syntrophobacter fumaroxidans (strain DSM 10017 / MPOB) protein is UPF0210 protein Sfum_2948.